Consider the following 158-residue polypeptide: MRIGHGFDAHRFGSTGKLILGGVEIPHEQGLIAHSDGDVVIHALCDALLGGAALGDIGRHFPDTSAEFKNADSQKLLHRVMVLLKEHGFKVSNGDMTIIAQIPKLAPYLPAMRETLALALGLPLQRFNIKATTTERMGYIGRAEGIAAHAVVLLLEEQ.

Residues Asp-8 and His-10 each coordinate a divalent metal cation. 4-CDP-2-C-methyl-D-erythritol 2-phosphate-binding positions include 8–10 (DAH) and 34–35 (HS). A divalent metal cation is bound at residue His-42. 4-CDP-2-C-methyl-D-erythritol 2-phosphate-binding positions include 56-58 (DIG), 132-135 (TTTE), and Arg-142.

This sequence belongs to the IspF family. Homotrimer. Requires a divalent metal cation as cofactor.

The catalysed reaction is 4-CDP-2-C-methyl-D-erythritol 2-phosphate = 2-C-methyl-D-erythritol 2,4-cyclic diphosphate + CMP. It functions in the pathway isoprenoid biosynthesis; isopentenyl diphosphate biosynthesis via DXP pathway; isopentenyl diphosphate from 1-deoxy-D-xylulose 5-phosphate: step 4/6. In terms of biological role, involved in the biosynthesis of isopentenyl diphosphate (IPP) and dimethylallyl diphosphate (DMAPP), two major building blocks of isoprenoid compounds. Catalyzes the conversion of 4-diphosphocytidyl-2-C-methyl-D-erythritol 2-phosphate (CDP-ME2P) to 2-C-methyl-D-erythritol 2,4-cyclodiphosphate (ME-CPP) with a corresponding release of cytidine 5-monophosphate (CMP). In Nitrosococcus oceani (strain ATCC 19707 / BCRC 17464 / JCM 30415 / NCIMB 11848 / C-107), this protein is 2-C-methyl-D-erythritol 2,4-cyclodiphosphate synthase.